We begin with the raw amino-acid sequence, 1083 residues long: DNA primase (1083 aa).

The CHC2-type zinc finger occupies 1022-1061; the sequence is CLRYPHRGGRTAPRTFVSLRVDHHNRLCISLAQQCFATKC.

The protein belongs to the herpesviridae DNA primase family. Associates with the helicase and the primase-associated factor to form the helicase-primase factor.

It is found in the host nucleus. In terms of biological role, essential component of the helicase/primase complex. Unwinds the DNA at the replication forks and generates single-stranded DNA for both leading and lagging strand synthesis. The primase initiates primer synthesis and thereby produces large amount of short RNA primers on the lagging strand that the polymerase elongates using dNTPs. This is DNA primase from Homo sapiens (Human).